A 473-amino-acid polypeptide reads, in one-letter code: Ral-GDS-related protein (473 aa).

The disordered stretch occupies residues 117–215 (EPNEAKPDDP…NQPSEELPDM (99 aa)). Over residues 134–157 (ALTMPALEPAPPLLADLGPALEPE) the composition is skewed to low complexity. Residues 173 to 185 (GPAPAPGEGPPPG) show a composition bias toward pro residues. Positions 219–471 (PPRLLAEQLT…YKLSCQLEPE (253 aa)) constitute a Ras-GEF domain.

Its subcellular location is the cytoplasmic vesicle. The chain is Ral-GDS-related protein (RGL4) from Homo sapiens (Human).